Consider the following 181-residue polypeptide: CASP-like protein 5A1 (181 aa).

The Cytoplasmic portion of the chain corresponds to 1 to 38 (MFASRPVVHPLEVAAPAHPVQQPAPGVLMKDLPGMPGT). Residues 39–59 (PGGLGLRVLQLLFAAISLAVM) traverse the membrane as a helical segment. Over 60–77 (SSTADFASVSAFCYLITT) the chain is Extracellular. A helical transmembrane segment spans residues 78 to 98 (TVLQCVWSLTVAIVDIYALLV). Residues 99–115 (KRCLQNRRAVTLFSIGD) are Cytoplasmic-facing. A helical transmembrane segment spans residues 116 to 136 (GITWLVSFSGACAAAGIPVLI). Residues 137 to 153 (DADLIMCSENPCASFQT) lie on the Extracellular side of the membrane. Residues 154-174 (AVAMGFMCCFSLLPSFLLNFY) form a helical membrane-spanning segment. Topologically, residues 175–181 (SIASSHG) are cytoplasmic.

This sequence belongs to the Casparian strip membrane proteins (CASP) family. As to quaternary structure, homodimer and heterodimers.

The protein localises to the cell membrane. The protein is CASP-like protein 5A1 of Zea mays (Maize).